The sequence spans 122 residues: Large ribosomal subunit protein uL14 (122 aa).

The protein belongs to the universal ribosomal protein uL14 family. As to quaternary structure, part of the 50S ribosomal subunit. Forms a cluster with proteins L3 and L19. In the 70S ribosome, L14 and L19 interact and together make contacts with the 16S rRNA in bridges B5 and B8.

Functionally, binds to 23S rRNA. Forms part of two intersubunit bridges in the 70S ribosome. The chain is Large ribosomal subunit protein uL14 from Erythrobacter litoralis (strain HTCC2594).